We begin with the raw amino-acid sequence, 432 residues long: 3-phosphoshikimate 1-carboxyvinyltransferase (432 aa).

Residues K21, S22, and R26 each coordinate 3-phosphoshikimate. K21 is a phosphoenolpyruvate binding site. Phosphoenolpyruvate is bound by residues G93 and R121. The 3-phosphoshikimate site is built by S166, Q168, D318, and K345. Q168 is a phosphoenolpyruvate binding site. Catalysis depends on D318, which acts as the Proton acceptor. The phosphoenolpyruvate site is built by R349 and R391.

The protein belongs to the EPSP synthase family. As to quaternary structure, monomer.

The protein resides in the cytoplasm. The enzyme catalyses 3-phosphoshikimate + phosphoenolpyruvate = 5-O-(1-carboxyvinyl)-3-phosphoshikimate + phosphate. It participates in metabolic intermediate biosynthesis; chorismate biosynthesis; chorismate from D-erythrose 4-phosphate and phosphoenolpyruvate: step 6/7. Catalyzes the transfer of the enolpyruvyl moiety of phosphoenolpyruvate (PEP) to the 5-hydroxyl of shikimate-3-phosphate (S3P) to produce enolpyruvyl shikimate-3-phosphate and inorganic phosphate. This chain is 3-phosphoshikimate 1-carboxyvinyltransferase, found in Persephonella marina (strain DSM 14350 / EX-H1).